Here is a 146-residue protein sequence, read N- to C-terminus: 3-dehydroquinate dehydratase (146 aa).

Tyr22 (proton acceptor) is an active-site residue. Substrate is bound by residues Asn74, His80, and Asp87. His100 (proton donor) is an active-site residue. Residues 101 to 102 (LS) and Arg111 each bind substrate.

The protein belongs to the type-II 3-dehydroquinase family. In terms of assembly, homododecamer.

It catalyses the reaction 3-dehydroquinate = 3-dehydroshikimate + H2O. The protein operates within metabolic intermediate biosynthesis; chorismate biosynthesis; chorismate from D-erythrose 4-phosphate and phosphoenolpyruvate: step 3/7. Functionally, catalyzes a trans-dehydration via an enolate intermediate. This Clostridium perfringens (strain 13 / Type A) protein is 3-dehydroquinate dehydratase.